We begin with the raw amino-acid sequence, 368 residues long: 4-hydroxy-3-methylbut-2-en-1-yl diphosphate synthase (flavodoxin) (368 aa).

Residues Cys-271, Cys-274, Cys-306, and Glu-313 each coordinate [4Fe-4S] cluster.

Belongs to the IspG family. The cofactor is [4Fe-4S] cluster.

It carries out the reaction (2E)-4-hydroxy-3-methylbut-2-enyl diphosphate + oxidized [flavodoxin] + H2O + 2 H(+) = 2-C-methyl-D-erythritol 2,4-cyclic diphosphate + reduced [flavodoxin]. The protein operates within isoprenoid biosynthesis; isopentenyl diphosphate biosynthesis via DXP pathway; isopentenyl diphosphate from 1-deoxy-D-xylulose 5-phosphate: step 5/6. In terms of biological role, converts 2C-methyl-D-erythritol 2,4-cyclodiphosphate (ME-2,4cPP) into 1-hydroxy-2-methyl-2-(E)-butenyl 4-diphosphate. This is 4-hydroxy-3-methylbut-2-en-1-yl diphosphate synthase (flavodoxin) from Haemophilus influenzae (strain ATCC 51907 / DSM 11121 / KW20 / Rd).